We begin with the raw amino-acid sequence, 904 residues long: Phosphoenolpyruvate carboxylase (904 aa).

Active-site residues include His151 and Lys570.

This sequence belongs to the PEPCase type 1 family. Mg(2+) is required as a cofactor.

It catalyses the reaction oxaloacetate + phosphate = phosphoenolpyruvate + hydrogencarbonate. In terms of biological role, forms oxaloacetate, a four-carbon dicarboxylic acid source for the tricarboxylic acid cycle. The protein is Phosphoenolpyruvate carboxylase of Xanthomonas campestris pv. campestris (strain 8004).